The following is a 529-amino-acid chain: Kunitz-type protease inhibitor 1 (529 aa).

Residues 1-35 (MAPARTMARARLAPAGIPAVALWLLCTLGLQGTQA) form the signal peptide. Residues 57-140 (GVPGFVLDTN…FAPREGFINY (84 aa)) form the MANSC domain. 2 N-linked (GlcNAc...) asparagine glycosylation sites follow: asparagine 66 and asparagine 235. The 51-residue stretch at 250–300 (CLASNKVGRCRGSFPRWYYDPTEQICKSFVYGGCLGNKNNYLREEECILAC) folds into the BPTI/Kunitz inhibitor 1 domain. Intrachain disulfides connect cysteine 250/cysteine 300, cysteine 259/cysteine 283, cysteine 275/cysteine 296, cysteine 335/cysteine 347, cysteine 342/cysteine 360, cysteine 354/cysteine 369, cysteine 391/cysteine 441, cysteine 400/cysteine 424, and cysteine 416/cysteine 437. An LDL-receptor class A domain is found at 334–370 (TCQPTQFRCSNGCCIDSFLECDDTPNCPDASDEAACE). The 51-residue stretch at 391–441 (CVDLPDTGLCKESIPRWYYNPFSEHCARFTYGGCYGNKNNFEEEQQCLESC) folds into the BPTI/Kunitz inhibitor 2 domain. Asparagine 523 carries an N-linked (GlcNAc...) asparagine glycan.

Interacts with HGFAC. Interacts with TMPRSS13; the interaction promotes the phosphorylation and cell membrane localization of TMPRSS13.

The protein resides in the secreted. The protein localises to the cytoplasm. It is found in the cell membrane. Inhibitor of HGFAC. Inhibits serine protease activity of ST14/matriptase in vitro. Inhibits serine protease activity of TMPRSS13, via the BPTI/Kunitz inhibitor 1 domain. The polypeptide is Kunitz-type protease inhibitor 1 (SPINT1) (Homo sapiens (Human)).